A 722-amino-acid polypeptide reads, in one-letter code: Disintegrin and metalloproteinase domain-containing protein 21 (722 aa).

The first 31 residues, 1-31 (MAVDGTLVYIRVTLLLLWLGVFLSISGYCQA), serve as a signal peptide directing secretion. Residues 32-196 (GPSQHFTSPE…FEEAENSALE (165 aa)) constitute a propeptide that is removed on maturation. A glycan (N-linked (GlcNAc...) asparagine) is linked at Asn-164. The Cysteine switch motif lies at 171-178 (MRCGLTEK). Residue Cys-173 participates in Zn(2+) binding. Over 197 to 681 (PKSAGDWWTH…DSGPASAKRG (485 aa)) the chain is Extracellular. One can recognise a Peptidase M12B domain in the interval 208–398 (WFLELVVVVN…NQGSCLHNPP (191 aa)). Asn-227 carries N-linked (GlcNAc...) asparagine glycosylation. 3 disulfide bridges follow: Cys-316-Cys-393, Cys-356-Cys-378, and Cys-358-Cys-363. His-341 contacts Zn(2+). Glu-342 is a catalytic residue. His-345 and His-351 together coordinate Zn(2+). N-linked (GlcNAc...) asparagine glycans are attached at residues Asn-377, Asn-437, Asn-478, Asn-546, and Asn-600. In terms of domain architecture, Disintegrin spans 406-492 (LKRCGNGVVE…QCPEDRYVQD (87 aa)). Cys-464 and Cys-484 are oxidised to a cystine. 3 cysteine pairs are disulfide-bonded: Cys-634/Cys-645, Cys-639/Cys-651, and Cys-653/Cys-662. The 30-residue stretch at 634 to 663 (CLPETCNMKGICNNKHHCHCGYGWSPPYCQ) folds into the EGF-like domain. The chain crosses the membrane as a helical span at residues 682-702 (VFLPLIVIPSLSVLTFLFTVG). Over 703-722 (LLMYLRQCSGPKETKAHSSG) the chain is Cytoplasmic.

Zn(2+) serves as cofactor. In terms of processing, has no obvious cleavage site for furin endopeptidase, suggesting that the proteolytic processing is regulated.

It is found in the membrane. May be involved in sperm maturation and/or fertilization. May also be involved in epithelia functions associated with establishing and maintaining gradients of ions or nutrients. This Homo sapiens (Human) protein is Disintegrin and metalloproteinase domain-containing protein 21 (ADAM21).